A 346-amino-acid polypeptide reads, in one-letter code: Tetraacyldisaccharide 4'-kinase (346 aa).

An ATP-binding site is contributed by 62–69 (TAGGTGKT).

Belongs to the LpxK family.

The catalysed reaction is a lipid A disaccharide + ATP = a lipid IVA + ADP + H(+). It functions in the pathway glycolipid biosynthesis; lipid IV(A) biosynthesis; lipid IV(A) from (3R)-3-hydroxytetradecanoyl-[acyl-carrier-protein] and UDP-N-acetyl-alpha-D-glucosamine: step 6/6. In terms of biological role, transfers the gamma-phosphate of ATP to the 4'-position of a tetraacyldisaccharide 1-phosphate intermediate (termed DS-1-P) to form tetraacyldisaccharide 1,4'-bis-phosphate (lipid IVA). In Xanthomonas oryzae pv. oryzae (strain MAFF 311018), this protein is Tetraacyldisaccharide 4'-kinase.